The chain runs to 69 residues: MFTLNKFLLLLFFLGTINLSFCEEENAEEERIDEPDETDVEVEKRFLPIIAGIAAKVFPKIFCAISKKC.

The first 20 residues, 1–20 (MFTLNKFLLLLFFLGTINLS), serve as a signal peptide directing secretion. The propeptide occupies 21–43 (FCEEENAEEERIDEPDETDVEVE). Cysteines 63 and 69 form a disulfide.

Expressed by the skin glands.

It localises to the secreted. Antibacterial activity against Gram-positive bacterium S.aureus and Gram-negative bacterium E.coli. Has activity against C.albicans. In Lithobates pipiens (Northern leopard frog), this protein is Brevinin-1Pb.